The sequence spans 165 residues: MTAIRDNLCELKRLEIPRPKCQGMQFVATRGRQGFYRTIRENGAMYGIQLKPQGPKRPQLSSDLFNRPMTVPEENSEDVEEAQTSQPETRKVEMNNNNNYKISYTSRPPLPPQQPKQTYTLQRTTPQAQPTPQQPRMFSRSSGGITGAVNNRPQMVAQQREIAQK.

A disordered region spans residues glutamine 49–lysine 165. Residues methionine 94–serine 106 are compositionally biased toward polar residues. A compositionally biased stretch (low complexity) spans threonine 120 to proline 135. The segment covering serine 139–alanine 157 has biased composition (polar residues).

This is an uncharacterized protein from Caenorhabditis elegans.